The following is a 458-amino-acid chain: MQIYLFNTLTQNKELFEPEDQTNVKMYVCGPTVYDNPHIGNSRSVVVYDLLYRILVDIFEAKSVKYVRNITDVDDKIIERAANLGISINELTDKVTKEFHTNMKYLFCLPPTIEPKATQHIDVMIEIIEKLIKSGHAYIADDHVYFDVLLAPNYTELSNRKLEDMFESVRVENSKTKKHPQDFVLWKPAKPDEDVHMNFKSPWGLGRPGWHIECSAMSYKYLGKNFDIHGGGADLIFPHHTNEIAQSKCAFSNSTYAKYWVHNGFLTVNGEKMSKSLGNFITVRDLMDKQIKGEIVRLFLLTAHYRRPLDYNDKAIEDAKKTLDYWYRAIQNINIQKIDTLPSDFMQSLFDDMNSPLAIKIINDYAKAIFTATNEEEKQFNASNLIACANFIGLMNETPHEWFNKDVDENYINNLINERLEAKKQKNWGLADQIRNKLLNEKIILEDKPNGTTIWRKE.

Cys-29 is a binding site for Zn(2+). The 'HIGH' region signature appears at 31-41; sequence PTVYDNPHIGN. Residues Cys-214, His-239, and Glu-243 each contribute to the Zn(2+) site. Residues 272 to 276 carry the 'KMSKS' region motif; sequence KMSKS. Lys-275 is a binding site for ATP.

Belongs to the class-I aminoacyl-tRNA synthetase family. In terms of assembly, monomer. Zn(2+) serves as cofactor.

The protein resides in the cytoplasm. The enzyme catalyses tRNA(Cys) + L-cysteine + ATP = L-cysteinyl-tRNA(Cys) + AMP + diphosphate. This Rickettsia bellii (strain OSU 85-389) protein is Cysteine--tRNA ligase.